Here is a 481-residue protein sequence, read N- to C-terminus: Glutamyl-tRNA(Gln) amidotransferase subunit A (481 aa).

Active-site charge relay system residues include Lys-74 and Ser-149. Ser-173 (acyl-ester intermediate) is an active-site residue.

The protein belongs to the amidase family. GatA subfamily. As to quaternary structure, heterotrimer of A, B and C subunits.

It carries out the reaction L-glutamyl-tRNA(Gln) + L-glutamine + ATP + H2O = L-glutaminyl-tRNA(Gln) + L-glutamate + ADP + phosphate + H(+). Its function is as follows. Allows the formation of correctly charged Gln-tRNA(Gln) through the transamidation of misacylated Glu-tRNA(Gln) in organisms which lack glutaminyl-tRNA synthetase. The reaction takes place in the presence of glutamine and ATP through an activated gamma-phospho-Glu-tRNA(Gln). The sequence is that of Glutamyl-tRNA(Gln) amidotransferase subunit A from Francisella tularensis subsp. novicida (strain U112).